Consider the following 385-residue polypeptide: Trans-enoyl reductase poxH (385 aa).

64 to 67 (QPYS) lines the NADP(+) pocket. Substrate is bound at residue 156–163 (PDPAAPPI). Residues 199–202 (STSV), 223–226 (SGTD), Y241, and 289–290 (LG) each bind NADP(+). Residue 309-313 (HMAPL) participates in substrate binding. 372-373 (KR) is a binding site for NADP(+).

Belongs to the zinc-containing alcohol dehydrogenase family. Monomer.

It functions in the pathway secondary metabolite biosynthesis. Trans-enoyl reductase; part of the gene cluster that mediates the biosynthesis of oxaleimides, cytotoxic compounds containing an unusual disubstituted succinimide moiety. The first step of the pathway is provided by the HR-PKS poxF that serves in a new mode of collaborative biosynthesis with the PKS-NRPS poxE, by providing the olefin containing amino acid substrate via the synthesis of an ACP-bound dec-4-enoate. The cytochrome P450 monooxygenase poxM-catalyzed oxidation at the alpha-position creates the enzyme-bound 2-hydroxydec-4-enoyl-ACP thioester, which may be prone to spontaneous hydrolysis to yield 2-hydroxydec-4-enoic acid due to increased electrophilicity of the carbonyl. 2-hydroxydec-4-enoic acid can then be further oxidized by poxM to yield the alpha-ketoacid 2-oxodec-4-enoicacid, which is reductively aminated by the aminotransferase poxL to yield (S,E)-2-aminodec-4-enoic acid. The Hybrid PKS-NRPS synthetase poxE then performs condensation between the octaketide product of its PKS modules and the amino group of (S,E)-2-aminodec-4-enoic acid which is activated and incorporated by the adenylation domain. The resulting aminoacyl product can be cyclized by the Diels-Alderase PoxQ and reductively released by the reductive (R) domain of poxE to yield an aldehyde intermediate. The released aldehyde is then substrate for a Knoevenagel condensation by the hydrolyase poxO followed by an oxidation at the 5-position of the pyrrolidone ring. The presence of the olefin from the amino acid building block allows for migration of the substituted allyl group to occur. This allylic transposition reaction takes place in a conjugate addition, semipinacol-like fashion to yield a succinimide intermediate. Iterative two-electron oxidations of the C7 methyl of the succinimide intermediate to the carboxylic acid can be catalyzed by one of two remaining cytochrome P450 monooxygenasess poxC or poxD to yield oxaleimide A. Subsequent oxidation yields the maleimide scaffold oxaleimide I. Both oxaleimide A and oxaleimide I can undergo oxidative modifications in the decalin ring to yield the series of products oxaleimides B to H. In Penicillium oxalicum, this protein is Trans-enoyl reductase poxH.